The sequence spans 374 residues: Methylthioribose-1-phosphate isomerase (374 aa).

Serine 2 carries the N-acetylserine modification. The active-site Proton donor is aspartate 253.

It belongs to the eIF-2B alpha/beta/delta subunits family. MtnA subfamily.

The protein localises to the cytoplasm. The protein resides in the nucleus. It catalyses the reaction 5-(methylsulfanyl)-alpha-D-ribose 1-phosphate = 5-(methylsulfanyl)-D-ribulose 1-phosphate. Its pathway is amino-acid biosynthesis; L-methionine biosynthesis via salvage pathway; L-methionine from S-methyl-5-thio-alpha-D-ribose 1-phosphate: step 1/6. In terms of biological role, catalyzes the interconversion of methylthioribose-1-phosphate (MTR-1-P) into methylthioribulose-1-phosphate (MTRu-1-P). The polypeptide is Methylthioribose-1-phosphate isomerase (Arabidopsis thaliana (Mouse-ear cress)).